Here is a 155-residue protein sequence, read N- to C-terminus: Small ribosomal subunit protein uS7 (155 aa).

The protein belongs to the universal ribosomal protein uS7 family. In terms of assembly, part of the 30S ribosomal subunit. Contacts proteins S9 and S11.

One of the primary rRNA binding proteins, it binds directly to 16S rRNA where it nucleates assembly of the head domain of the 30S subunit. Is located at the subunit interface close to the decoding center, probably blocks exit of the E-site tRNA. This Amoebophilus asiaticus (strain 5a2) protein is Small ribosomal subunit protein uS7.